The chain runs to 3341 residues: MKRKDLEARGKAPGRDSSTPFWGREGRRKDKDKGGESPSNRQVTLKTPIQSGRRAGKRQRVGLLGRLGVGWGSFLQEDIVQALIHMALVLHALFASIDRRIRSLSRRVTALESRRTTGNPMTLAFILGFLTVLCGCVVIDMQVSTTRGTEIFEGETNRTDYLHLLKLPADGCWSGILVTKKCPKVTDLAKDLESTDCGSTWTEFTLRYRRCVVKKREKRSREPPKADLLAEMEIIAFKTIRENKTIFIVALLCVAIAKRWPTWVVILLAIGTWTTVKGEFVEPLYTLKAEQMTMLQTIVRPEEGYVVATPNGLLEFKTGPAEIYGGQWLRELLADCHVNASYSTDVCPGGSQLNMADIMAKERVCSTQPYNRGWGTGCFKWGIGFVGTCVELHCDRGFNVSSIARSAIVMNVTASFHSVSDTQQMVGDIPLTFRFAKLGNAAMTCRLESEQLLLDYYHVTGSSHEGLFLRSQVDSWPGVHSTASGRHGMEKVVVWGDARSNEILVKNVIEPSLSWEDAIATHGGFRDISFVCQIMLDKLVSGAFRDCPGPKISTFSQDGFGYSGVVITTLTASSNETCSLSLTCHGCLLQSTKMIFLAGKTTSRAFVKCGNHTSTLLVGSTSVSIECALNPISQGWRLARHVVDRYRRFGVSGVAGVWQDLVGKFSVGAFFSNTALLVILVLAALIDKRIAFLLVLGGYFYYVRADLGCGIDTTRKTISCGSGVFVWKHLGVGISNDHAVELEDYSFTDLYIKDMFSWTTKPCLICEDALQCVALRRAAFSAVGSMGSERVYVNDTLARTFKFSETAKRTISVTINLIQYKFSSYVAHGRAEGDLGLLPTMYGSYPEKEADKVIRIVASRPDIRRLCGKAVSFQFKFTGFRRGLYGSNVQVEVSKNSSTECPTYLAGVAVKNGRTVITDGMFWMESIVLDGVAQITSLEMRQSHRCVWPREYTPDTLSDPSDQALFIPPAWGGPISRVNHIIGYKTQTDFPWNVSDITLIEGPAPGTKVKVDSRCHGRMHAQVIGPNDTESWCCQSCTRIVHFRVGDLLYYPMEIQLGTMSEASEPNSKIFEEPIGEEPEPTVDDILKRYGKANAQSDFRRVSQRAGVWFDRSLLNLLCLAISLQLIGAKTRTSTLTRLFLTILAMALFGLPNLFSSVGLSAWVLLVASSSAQPQDLSMNLWIVLQTGSSAVLLLGYMIRRKLAMVLGVHHLVTLMCVQFLFSAVDRYQKYLYGLLELMASVVLLSAYKSVLQALPPEVLCFSLVMGWKTALSLATVVFLIFSLNAMYKYACQYHNPRNGYRDSGANLWFWTVSLASAGGIWAAEKAHQPTVAAVLAFTMVVLFLYMEQTNVSMELEFISAGETPEGVSTENDDGINIPDLKGRYGEDGIVVGAASSSGYLPELVFVFLLGFAVTSTSYFLGALYLLIATSTNLPVVIIRMLRMKLTASNRSDDLLGLGGPVETDLQTSFQDIPNGVYRIVVRSLFGDRQRGAGFSKNGVFHTLMHVTRGEPVKWRGRVVVPHSGSALRDVVSYGGPWQLDTPTTTEDLVLMACKPDKTIEYHRYRPGVMSIDGEPVMFISDDFGKGSSGSPFFINGEPVGFYGFGFYVNGIYRSTVAGGKPTDVTESLNCDSTRRFVTWHPGKGKTRKVIVEETKKNYDSNQRTVILTPTRVVMAEVVEALNNSGMRSDKNLSYCTRNLITVACHATFTKFVLSHGAKKVRVAMIIMDECHFMDPMSIAARGILEHLHGQGTKLIYLSATPPGHAPDTGSNYAISDQSISFPTWLSPAWIGNVQKSVGAKKTILFVPSHNQANTLASAIPGSVPLHRANFSSNYAQAGDAATALVISTDISEMGANLGVDLVIDTRRALRPLVDSATRVKLVETNITTSSMIQRRGRTGRREPGTYVYPIDSQTEENPVSWVCWPEAQMILDQLGMTFMLEEAAYSQPPGRFTLVGEDRMRFLKLMDRDDIPIWLAWHWAEAGDRRHSALFQGAGTGKIIENRFGKQEYRPQYVDDRFESIEWETRKVSIDFYMNCRGGPTLYEFFTVVDWTDIWRRTASALWDLSDVMNGEVRDRYTTERSLTVVMAFVLGVSIMLSCFIAVWALCFLFSLFRPKKATYEQMPSSDPLSGGVLVSTPSVLYCMGVPLGFCVVITLAMFLVYPVLYKSIGNRSYMDSDLVKWVILGSCLICGVLAWEMRMFPNIRSDLMELVKAVKEPEEVVNSGPSFPSWEIAQGKGATMLDSLQVFFFITVLSTKFLYWFQENWTARMYAMKHPEMVSSIGGFRFDEIPFRAVLPSGFAIVAIASLPSVVVGLLAAGVFMAIMYCQNKWNATPKILTALDARDQRHDRPTEITSRVPLENTRSIMYAFCLIFSLFWAFCTRSPGDFLRGSLVVGASMWQILHPRSKIHDVMDFGSMVSAIGLLEMNYLFYRFMHIAARALGAVAPFNQFRALEKSTTIGLGMKWKMTLNALDGDAFTRYKSRGVNETERGDYVSRGGLKLNEIISKYEWRPSGRVVDLGCGRGGWSQRAVMEETVSSALGFTIGGAEKENPQRFVTKGYNLATLKTGVDVHRLTPFRCDTIMCDIGESDPSPIKEKTRTLKVLQLLENWLLVNPGAHFVCKILSPYSLEVLRKIESLQHLYNGRLVRLSHSRNSSVEMYYISGARSNVVRTTYMTLAALMARFSRHLDSVVLPSPVLPKGTRADPAASVASMNTSDMMDRVERLMNENRGTWFEDQQHPYKSFKYFGSFVTDDVKVGGQAVNPLVRKIMWPWETLTSVVGFSMTDVSTYSQQKVLREKVDTVIPPHPQHIRRVNRTITKHFIRLFKNRNLRPRILSKEEFVANVRNDAAVGSWSRDVPWRDVQEAIQDQCFWDLVGKERALHLQGKCEMCIYNTMGKKEKKPSLAGEAKGSRTIWYMWLGSRFLEFEALGFLNADHWVSREHFPGGVGGVGVNYFGYYLKDIASRGKYLIADDIAGWDTKISEEDLEDEEALLTALTEDPYHRALMAATMRLAYQNIVAMFPRTHSKYGSGTVMDVVGRRDQRGSGQVVTYALNTITNGKVQVARVLESEGLLQADESVLDAWLEKHLEEALGNMVIAGDDVVVSTDNRDFSSALEYLELTGKTRKNVPQGAPSRMESNWEKVEFCSHHYHEMSLKDGRIIIAPCRHENEVLGRSRLQKGGVVSISESACMAKAYAQMWALYYFHRRDLRLGFIAISSAVPTNWFPLGRTSWSVHQYHEWMTTDDMLRVWNDVWVHNNPWMLNKESIESWDDIPYLHKKQDITCGSLIGVKERATWAREIENSVISVRRIIDAETGVLNTYKDELSVMSRYRRGNDVI.

Composition is skewed to basic and acidic residues over residues 1 to 14 (MKRK…KAPG) and 24 to 35 (REGRRKDKDKGG). A disordered region spans residues 1-57 (MKRKDLEARGKAPGRDSSTPFWGREGRRKDKDKGGESPSNRQVTLKTPIQSGRRAGK). The Cytoplasmic segment spans residues 1–120 (MKRKDLEARG…LESRRTTGNP (120 aa)). Polar residues predominate over residues 37–50 (SPSNRQVTLKTPIQ). The segment at 55-97 (AGKRQRVGLLGRLGVGWGSFLQEDIVQALIHMALVLHALFASI) is hydrophobic; homodimerization of capsid protein C. The propeptide at 117-136 (TGNPMTLAFILGFLTVLCGC) is ER anchor for the capsid protein C, removed in mature form by serine protease NS3. A helical transmembrane segment spans residues 121-141 (MTLAFILGFLTVLCGCVVIDM). The Extracellular segment spans residues 142–245 (QVSTTRGTEI…AFKTIRENKT (104 aa)). Residues Asn-157 and Asn-243 are each glycosylated (N-linked (GlcNAc...) asparagine; by host). Residues 246-262 (IFIVALLCVAIAKRWPT) traverse the membrane as a helical segment. Residue Trp-263 is a topological domain, cytoplasmic. The chain crosses the membrane as a helical span at residues 264–278 (VVILLAIGTWTTVKG). Residues 279-665 (EFVEPLYTLK…GVWQDLVGKF (387 aa)) are Extracellular-facing. N-linked (GlcNAc...) asparagine; by host glycosylation occurs at Asn-339. The interval 371–384 (NRGWGTGCFKWGIG) is involved in fusion. N-linked (GlcNAc...) asparagine; by host glycans are attached at residues Asn-399, Asn-411, Asn-575, and Asn-611. The chain crosses the membrane as a helical span at residues 666 to 686 (SVGAFFSNTALLVILVLAALI). The Cytoplasmic segment spans residues 687–689 (DKR). The chain crosses the membrane as a helical span at residues 690-705 (IAFLLVLGGYFYYVRA). Topologically, residues 706-1138 (DLGCGIDTTR…AKTRTSTLTR (433 aa)) are extracellular. Residues Asn-794, Asn-896, Asn-993, and Asn-1027 are each glycosylated (N-linked (GlcNAc...) asparagine; by host). The chain crosses the membrane as a helical span at residues 1139–1159 (LFLTILAMALFGLPNLFSSVG). Residues 1160-1178 (LSAWVLLVASSSAQPQDLS) lie on the Cytoplasmic side of the membrane. Residues 1179-1199 (MNLWIVLQTGSSAVLLLGYMI) traverse the membrane as a helical segment. The Lumenal portion of the chain corresponds to 1200-1204 (RRKLA). Residues 1205–1225 (MVLGVHHLVTLMCVQFLFSAV) traverse the membrane as a helical segment. Residues 1226–1231 (DRYQKY) lie on the Cytoplasmic side of the membrane. Residues 1232 to 1252 (LYGLLELMASVVLLSAYKSVL) form a helical membrane-spanning segment. Topologically, residues 1253-1261 (QALPPEVLC) are lumenal. The helical transmembrane segment at 1262–1282 (FSLVMGWKTALSLATVVFLIF) threads the bilayer. Residues 1283–1303 (SLNAMYKYACQYHNPRNGYRD) are Cytoplasmic-facing. The chain crosses the membrane as a helical span at residues 1304–1324 (SGANLWFWTVSLASAGGIWAA). Over 1325–1326 (EK) the chain is Lumenal. Residues 1327-1347 (AHQPTVAAVLAFTMVVLFLYM) traverse the membrane as a helical segment. Over 1348-1403 (EQTNVSMELEFISAGETPEGVSTENDDGINIPDLKGRYGEDGIVVGAASSSGYLPE) the chain is Cytoplasmic. An intramembrane region (helical) is located at residues 1404 to 1424 (LVFVFLLGFAVTSTSYFLGAL). Over 1425 to 2089 (YLLIATSTNL…TERSLTVVMA (665 aa)) the chain is Cytoplasmic. In terms of domain architecture, Peptidase S7 spans 1452–1630 (SDDLLGLGGP…KPTDVTESLN (179 aa)). Active-site charge relay system; for serine protease NS3 activity residues include His-1506, Asp-1530, and Ser-1589. The region spanning 1627–1780 (ESLNCDSTRR…SNYAISDQSI (154 aa)) is the Helicase ATP-binding domain. 1640 to 1647 (WHPGKGKT) contacts ATP. Residues 1729–1732 (DECH) carry the DECH box motif. Residues 1793-1947 (NVQKSVGAKK…TFMLEEAAYS (155 aa)) enclose the Helicase C-terminal domain. A helical transmembrane segment spans residues 2090–2110 (FVLGVSIMLSCFIAVWALCFL). Residues 2111-2145 (FSLFRPKKATYEQMPSSDPLSGGVLVSTPSVLYCM) lie on the Lumenal side of the membrane. A helical transmembrane segment spans residues 2146-2166 (GVPLGFCVVITLAMFLVYPVL). Topologically, residues 2167 to 2178 (YKSIGNRSYMDS) are cytoplasmic. A helical transmembrane segment spans residues 2179–2199 (DLVKWVILGSCLICGVLAWEM). At 2200 to 2242 (RMFPNIRSDLMELVKAVKEPEEVVNSGPSFPSWEIAQGKGATM) the chain is on the lumenal side. A helical transmembrane segment spans residues 2243–2263 (LDSLQVFFFITVLSTKFLYWF). The Cytoplasmic segment spans residues 2264–2302 (QENWTARMYAMKHPEMVSSIGGFRFDEIPFRAVLPSGFA). The helical intramembrane region spans 2303 to 2323 (IVAIASLPSVVVGLLAAGVFM). Topologically, residues 2324-2366 (AIMYCQNKWNATPKILTALDARDQRHDRPTEITSRVPLENTRS) are cytoplasmic. Residues 2367 to 2387 (IMYAFCLIFSLFWAFCTRSPG) traverse the membrane as a helical segment. The Lumenal segment spans residues 2388-2412 (DFLRGSLVVGASMWQILHPRSKIHD). A helical membrane pass occupies residues 2413 to 2433 (VMDFGSMVSAIGLLEMNYLFY). Residues 2434–3341 (RFMHIAARAL…SRYRRGNDVI (908 aa)) lie on the Cytoplasmic side of the membrane. Residues 2454 to 2706 (ALEKSTTIGL…SPVLPKGTRA (253 aa)) enclose the mRNA cap 0-1 NS5-type MT domain. Ser-2497 lines the S-adenosyl-L-methionine pocket. The For 2'-O-MTase activity role is filled by Lys-2509. The S-adenosyl-L-methionine site is built by Gly-2527, Trp-2528, Thr-2545, Ile-2546, Asp-2572, and Val-2573. Residue Asp-2587 is the For 2'-O-MTase activity of the active site. Ile-2588 is a binding site for S-adenosyl-L-methionine. Active-site for 2'-O-MTase activity residues include Lys-2624 and Glu-2660. Residue Tyr-2662 coordinates S-adenosyl-L-methionine. Residues Glu-2881, His-2885, Cys-2890, and Cys-2893 each contribute to the Zn(2+) site. Positions 2970–3117 (KYLIADDIAG…STDNRDFSSA (148 aa)) constitute a RdRp catalytic domain. 3 residues coordinate Zn(2+): His-3152, Cys-3168, and Cys-3287.

It in the N-terminal section; belongs to the class I-like SAM-binding methyltransferase superfamily. mRNA cap 0-1 NS5-type methyltransferase family. Homodimer. As to quaternary structure, forms heterodimers with envelope protein E in the endoplasmic reticulum and Golgi. In terms of assembly, homodimer; in the endoplasmic reticulum and Golgi. Forms homodimers as well as homohexamers. NS1 may interact with NS4A. As to quaternary structure, forms a heterodimer with serine protease NS3. May form homooligomers. In terms of assembly, forms a heterodimer with NS2B. Interacts with NS4B. Interacts with unphosphorylated RNA-directed RNA polymerase NS5; this interaction stimulates RNA-directed RNA polymerase NS5 guanylyltransferase activity. Interacts with serine protease NS3. As to quaternary structure, interacts with host STAT2; this interaction inhibits the phosphorylation of the latter, and, when all viral proteins are present (polyprotein), targets STAT2 for degradation. In terms of processing, genome polyprotein: Specific enzymatic cleavages in vivo yield mature proteins. Cleavages in the lumen of endoplasmic reticulum are performed by host signal peptidase, whereas cleavages in the cytoplasmic side are performed by serine protease NS3. Signal cleavage at the 2K-4B site requires a prior NS3 protease-mediated cleavage at the 4A-2K site. Post-translationally, cleaved in post-Golgi vesicles by a host furin, releasing the mature small envelope protein M, and peptide pr. This cleavage is incomplete as up to 30% of viral particles still carry uncleaved prM. N-glycosylated. In terms of processing, N-glycosylated. The excreted form is glycosylated and this is required for efficient secretion of the protein from infected cells. Post-translationally, phosphorylated on serines residues. This phosphorylation may trigger NS5 nuclear localization.

The protein resides in the virion. It localises to the host nucleus. Its subcellular location is the secreted. It is found in the virion membrane. The protein localises to the host endoplasmic reticulum membrane. The catalysed reaction is Selective hydrolysis of -Xaa-Xaa-|-Yaa- bonds in which each of the Xaa can be either Arg or Lys and Yaa can be either Ser or Ala.. The enzyme catalyses RNA(n) + a ribonucleoside 5'-triphosphate = RNA(n+1) + diphosphate. It catalyses the reaction a ribonucleoside 5'-triphosphate + H2O = a ribonucleoside 5'-diphosphate + phosphate + H(+). It carries out the reaction ATP + H2O = ADP + phosphate + H(+). The catalysed reaction is a 5'-end (5'-triphosphoguanosine)-ribonucleoside in mRNA + S-adenosyl-L-methionine = a 5'-end (N(7)-methyl 5'-triphosphoguanosine)-ribonucleoside in mRNA + S-adenosyl-L-homocysteine. The enzyme catalyses a 5'-end (N(7)-methyl 5'-triphosphoguanosine)-ribonucleoside in mRNA + S-adenosyl-L-methionine = a 5'-end (N(7)-methyl 5'-triphosphoguanosine)-(2'-O-methyl-ribonucleoside) in mRNA + S-adenosyl-L-homocysteine + H(+). Plays a role in virus budding by binding to the cell membrane and gathering the viral RNA into a nucleocapsid that forms the core of a mature virus particle. During virus entry, may induce genome penetration into the host cytoplasm after hemifusion induced by the surface proteins. Can migrate to the cell nucleus where it modulates host functions. Functionally, prevents premature fusion activity of envelope proteins in trans-Golgi by binding to envelope protein E at pH6.0. After virion release in extracellular space, gets dissociated from E dimers. In terms of biological role, acts as a chaperone for envelope protein E during intracellular virion assembly by masking and inactivating envelope protein E fusion peptide. prM is the only viral peptide matured by host furin in the trans-Golgi network probably to avoid catastrophic activation of the viral fusion activity in acidic Golgi compartment prior to virion release. prM-E cleavage is inefficient, and many virions are only partially matured. These uncleaved prM would play a role in immune evasion. Its function is as follows. May play a role in virus budding. Exerts cytotoxic effects by activating a mitochondrial apoptotic pathway through M ectodomain. May display a viroporin activity. Binds to host cell surface receptor and mediates fusion between viral and cellular membranes. Envelope protein is synthesized in the endoplasmic reticulum in the form of heterodimer with protein prM. They play a role in virion budding in the ER, and the newly formed immature particle is covered with 60 spikes composed of heterodimer between precursor prM and envelope protein E. The virion is transported to the Golgi apparatus where the low pH causes dissociation of PrM-E heterodimers and formation of E homodimers. prM-E cleavage is inefficient, and many virions are only partially matured. These uncleaved prM would play a role in immune evasion. Functionally, involved in immune evasion, pathogenesis and viral replication. Once cleaved off the polyprotein, is targeted to three destinations: the viral replication cycle, the plasma membrane and the extracellular compartment. May play a role in viral genome replication. Assist membrane bending and envelopment of genomic RNA at the endoplasmic reticulum. Excreted as a hexameric lipoparticle that plays a role against host immune response. In terms of biological role, component of the viral RNA replication complex that functions in virion assembly and antagonizes the host immune response. Its function is as follows. Required cofactor for the serine protease function of NS3. May have membrane-destabilizing activity and form viroporins. Displays three enzymatic activities: serine protease, NTPase and RNA helicase. NS3 serine protease, in association with NS2B, performs its autocleavage and cleaves the polyprotein at dibasic sites in the cytoplasm: C-prM, NS2A-NS2B, NS2B-NS3, NS3-NS4A, NS4A-2K and NS4B-NS5. NS3 RNA helicase binds RNA and unwinds dsRNA in the 3' to 5' direction. Functionally, regulates the ATPase activity of the NS3 helicase activity. NS4A allows NS3 helicase to conserve energy during unwinding. In terms of biological role, functions as a signal peptide for NS4B and is required for the interferon antagonism activity of the latter. Its function is as follows. Inhibits interferon (IFN)-induced host STAT1 phosphorylation and nuclear translocation, thereby preventing the establishment of a cellular antiviral state by blocking the IFN-alpha/beta pathway. Replicates the viral (+) and (-) RNA genome, and performs the capping of genomes in the cytoplasm. NS5 methylates viral RNA cap at guanine N-7 and ribose 2'-O positions. Besides its role in RNA genome replication, also prevents the establishment of cellular antiviral state by blocking the interferon-alpha/beta (IFN-alpha/beta) signaling pathway. Inhibits host TYK2 and STAT2 phosphorylation, thereby preventing activation of JAK-STAT signaling pathway. In Aedes (CFA flavivirus), this protein is Genome polyprotein.